A 378-amino-acid polypeptide reads, in one-letter code: tRNA-specific 2-thiouridylase MnmA (378 aa).

Residues 12 to 19 (GLSGGVDS) and Met-38 each bind ATP. The tract at residues 98–100 (NPD) is interaction with target base in tRNA. Cys-103 serves as the catalytic Nucleophile. Residues Cys-103 and Cys-201 are joined by a disulfide bond. An ATP-binding site is contributed by Gly-127. Residues 151–153 (KDQ) are interaction with tRNA. Catalysis depends on Cys-201, which acts as the Cysteine persulfide intermediate. Residues 319–320 (RY) form an interaction with tRNA region.

This sequence belongs to the MnmA/TRMU family.

The protein resides in the cytoplasm. The enzyme catalyses S-sulfanyl-L-cysteinyl-[protein] + uridine(34) in tRNA + AH2 + ATP = 2-thiouridine(34) in tRNA + L-cysteinyl-[protein] + A + AMP + diphosphate + H(+). Its function is as follows. Catalyzes the 2-thiolation of uridine at the wobble position (U34) of tRNA, leading to the formation of s(2)U34. In Paracidovorax citrulli (strain AAC00-1) (Acidovorax citrulli), this protein is tRNA-specific 2-thiouridylase MnmA.